The sequence spans 100 residues: NADH-quinone oxidoreductase subunit K (100 aa).

The next 3 helical transmembrane spans lie at 2–22, 28–48, and 63–83; these read VTLNHYLILSSLLFMIGLVGV, LLMLFFSTEIMLNAVNVGLVA, and FFIIAVAASEVAVGLGLLILW.

The protein belongs to the complex I subunit 4L family. In terms of assembly, NDH-1 is composed of 14 different subunits. Subunits NuoA, H, J, K, L, M, N constitute the membrane sector of the complex.

It localises to the cell inner membrane. The enzyme catalyses a quinone + NADH + 5 H(+)(in) = a quinol + NAD(+) + 4 H(+)(out). In terms of biological role, NDH-1 shuttles electrons from NADH, via FMN and iron-sulfur (Fe-S) centers, to quinones in the respiratory chain. The immediate electron acceptor for the enzyme in this species is believed to be ubiquinone. Couples the redox reaction to proton translocation (for every two electrons transferred, four hydrogen ions are translocated across the cytoplasmic membrane), and thus conserves the redox energy in a proton gradient. This is NADH-quinone oxidoreductase subunit K from Wolinella succinogenes (strain ATCC 29543 / DSM 1740 / CCUG 13145 / JCM 31913 / LMG 7466 / NCTC 11488 / FDC 602W) (Vibrio succinogenes).